A 221-amino-acid polypeptide reads, in one-letter code: MIIAIDGPSASGKSSIARELGVKLGYKFISSGYLYRIITLIAQKFLMSSCDFISEDRLLNLILENDISFNDSSFFLNGENVESQILNDKIDFQVSFYSSYVGIRNIVNKKLREVVKFSNDNYIIEGRDITTIVFPESEFKIYLDASVKVRALRRYKQRNGNETLEELERTLKIRDDVDKRKQYGKLKLSKGVFYLDTSYKGLDDVCNIIIEKFNLKKVRER.

7-15 (GPSASGKSS) serves as a coordination point for ATP.

This sequence belongs to the cytidylate kinase family. Type 1 subfamily.

Its subcellular location is the cytoplasm. The catalysed reaction is CMP + ATP = CDP + ADP. It catalyses the reaction dCMP + ATP = dCDP + ADP. The sequence is that of Cytidylate kinase 1 from Borrelia garinii subsp. bavariensis (strain ATCC BAA-2496 / DSM 23469 / PBi) (Borreliella bavariensis).